Reading from the N-terminus, the 250-residue chain is tRNA pseudouridine synthase A (250 aa).

Aspartate 53 serves as the catalytic Nucleophile. Tyrosine 111 serves as a coordination point for substrate.

It belongs to the tRNA pseudouridine synthase TruA family. Homodimer.

The catalysed reaction is uridine(38/39/40) in tRNA = pseudouridine(38/39/40) in tRNA. Formation of pseudouridine at positions 38, 39 and 40 in the anticodon stem and loop of transfer RNAs. In Streptococcus uberis (strain ATCC BAA-854 / 0140J), this protein is tRNA pseudouridine synthase A.